A 635-amino-acid chain; its full sequence is Extracellular metalloproteinase 1 (635 aa).

An N-terminal signal peptide occupies residues 1–19 (MHGLLLAAGLLSLPLHVLA). Positions 20-246 (HPQPSTSTSL…VHNVVDYVAH (227 aa)) are excised as a propeptide. An N-linked (GlcNAc...) asparagine glycan is attached at N287. Zn(2+) is bound at residue H430. E431 is a catalytic residue. Residue H434 coordinates Zn(2+). N-linked (GlcNAc...) asparagine glycans are attached at residues N475, N594, and N623.

It belongs to the peptidase M36 family. The cofactor is Zn(2+).

The protein localises to the secreted. Its function is as follows. Secreted metalloproteinase probably acting as a virulence factor. The chain is Extracellular metalloproteinase 1 (MEP1) from Arthroderma benhamiae (Trichophyton mentagrophytes).